The primary structure comprises 122 residues: Large ribosomal subunit protein uL14 (122 aa).

This sequence belongs to the universal ribosomal protein uL14 family. In terms of assembly, part of the 50S ribosomal subunit. Forms a cluster with proteins L3 and L19. In the 70S ribosome, L14 and L19 interact and together make contacts with the 16S rRNA in bridges B5 and B8.

Its function is as follows. Binds to 23S rRNA. Forms part of two intersubunit bridges in the 70S ribosome. In Shewanella sediminis (strain HAW-EB3), this protein is Large ribosomal subunit protein uL14.